A 244-amino-acid chain; its full sequence is Tyrosine recombinase XerD-like (244 aa).

In terms of domain architecture, Core-binding (CB) spans 1-73; it reads MRDRISAFLE…ACNQFLYFLY (73 aa). The region spanning 90-244 is the Tyr recombinase domain; it reads AEKKTEKPEI…KTVLTLEKYR (155 aa). Active-site residues include Lys150 and Arg211. The active-site O-(3'-phospho-DNA)-tyrosine intermediate is Tyr243.

Belongs to the 'phage' integrase family. XerD-like subfamily.

Its subcellular location is the cytoplasm. Putative tyrosine recombinase. Not involved in the cutting and rejoining of the recombining DNA molecules on dif(SL) site. The chain is Tyrosine recombinase XerD-like from Streptococcus pneumoniae serotype 2 (strain D39 / NCTC 7466).